The following is a 298-amino-acid chain: MIVMQFPREEYFAPGHRGCAGCGAAIVARLLLKVAGKDTIITNATGCLEVMTTPYPETSWRVPWIHTAFENAAATASGIEAAVKALKRKRGKFADKKINVIAIGGDGGTADIGFQALSGAMERGHDILYIMYDNEAYMNTGIQRSSSTPFMAATTTSPAGSKIRGEDRPKKDMTMIMAAHGIPYVATACISYPEDFMRKVKKALSIEGPKFIQVLQPCTTGWGYPPEKTIEIGRLAVETGIFPLYEIENGEFRITYKPAKRKPVREYLKMQKRYRHLTDEDIERIQKYIDEKCKLLGL.

Residues C19, C22, C47, and C218 each coordinate [4Fe-4S] cluster.

In terms of assembly, heterotetramer of one alpha, one beta, one delta and one gamma chain. Requires [4Fe-4S] cluster as cofactor.

The catalysed reaction is 2 oxidized [2Fe-2S]-[ferredoxin] + pyruvate + CoA = 2 reduced [2Fe-2S]-[ferredoxin] + acetyl-CoA + CO2 + H(+). This chain is Pyruvate synthase subunit PorB (porB), found in Methanocaldococcus jannaschii (strain ATCC 43067 / DSM 2661 / JAL-1 / JCM 10045 / NBRC 100440) (Methanococcus jannaschii).